The following is a 314-amino-acid chain: Solute carrier family 25 member 44 (314 aa).

Solcar repeat units lie at residues Lys18 to Phe100, Ser107 to Gln210, and Pro220 to Leu302. A run of 6 helical transmembrane segments spans residues Phe20–Arg42, Thr71–Tyr90, Leu113–Val133, Gly185–Trp201, Ile222–Leu239, and Leu278–Tyr296.

This sequence belongs to the mitochondrial carrier (TC 2.A.29) family.

Its subcellular location is the mitochondrion membrane. The catalysed reaction is L-valine(in) = L-valine(out). The enzyme catalyses L-leucine(in) = L-leucine(out). Mitochondrial solute transporter which transports branched-chain amino acid (BCAA; valine, leucine and isoleucine) into mitochondria in brown adipose tissue (BAT). BAT is involved in BCAA catabolism and actively utilizes BCAA in the mitochondria for thermogenesis. This chain is Solute carrier family 25 member 44, found in Pongo abelii (Sumatran orangutan).